A 364-amino-acid chain; its full sequence is Trans-enoyl reductase sthE (364 aa).

51–54 (TDYK) contacts NADP(+). Residue 137–144 (WGTAALAI) participates in substrate binding. Residues 172–175 (ATAT), 195–198 (SESS), Y213, and 261–262 (LE) each bind NADP(+). 281–285 (GFEGQ) provides a ligand contact to substrate. 351–352 (VK) provides a ligand contact to NADP(+).

The protein belongs to the zinc-containing alcohol dehydrogenase family. As to quaternary structure, monomer.

The catalysed reaction is 7 malonyl-CoA + acetyl-CoA + 10 AH2 + 5 S-adenosyl-L-methionine + 2 H(+) = dehydroprobetaenone I + 10 A + 5 S-adenosyl-L-homocysteine + 7 CO2 + 8 CoA + 6 H2O. Its pathway is mycotoxin biosynthesis. Trans-enoyl reductase; part of the gene cluster that mediates the biosynthesis of the phytotoxin stemphyloxin II. The first step of the pathway is the synthesis of dehydroprobetaenone I by the polyketide synthase sthA and the enoyl reductase sthE via condensation of one acetyl-CoA starter unit with 7 malonyl-CoA units and 5 methylations. The C-terminal reductase (R) domain of sthA catalyzes the reductive release of the polyketide chain. Because sthA lacks a designated enoylreductase (ER) domain, the required activity is provided the enoyl reductase sthE. The short-chain dehydrogenase/reductase sthC then catalyzes reduction of dehydroprobetaenone I to probetaenone I. The cytochrome P450 monooxygenase sthF catalyzes successive epoxidation, oxidation (resulting from epoxide opening) and hydroxylation to install a tertiary alcohol in the decaline ring to yield betaenone C from dehydroprobetaenone I and betaenone B from probetaenone I. The FAD-linked oxidoreductase sthB is responsible for the conversion of betaenone C to betaenone A via an intramolecular aldol reaction between C-1 and C-17 to form the bridged tricyclic system in betaenone A. Finally, the cytochrome P450 monooxygenase sthD catalyzes the hydroxylation of C-15 to afford the final metabolite stemphyloxin II. The polypeptide is Trans-enoyl reductase sthE (Phaeosphaeria nodorum (strain SN15 / ATCC MYA-4574 / FGSC 10173) (Glume blotch fungus)).